The sequence spans 651 residues: DNA endonuclease RBBP8 (651 aa).

Coiled coils occupy residues 35–84 (LQEL…EDRL) and 117–138 (ISEL…SLEL). 3 disordered regions span residues 138-199 (LERL…PESR), 363-433 (NGRL…EHQA), and 487-539 (YESC…SDKS). The segment covering 363 to 379 (NGRLQSKNQETSEIETT) has biased composition (polar residues). Residues 380–391 (QDSKKKCLDGHT) are compositionally biased toward basic and acidic residues. Positions 503-515 (VYEEEREEDDPEE) are enriched in acidic residues. Over residues 525–539 (RPADRKPLVSDSDKS) the composition is skewed to basic and acidic residues. A phosphothreonine mark is found at Thr-599 and Thr-611.

This sequence belongs to the COM1/SAE2/CtIP family. Homotetramer; formed by antiparallel association of helical extensions protruding from the N-termini of two parallel coiled-coil dimers. Interacts with the MRN complex; the interaction links DNA sensing to resection. Interacts with samhd1. Phosphorylation at Thr-599 and Thr-611 promote interaction with nbn and recruitment to double-strand breaks (DSBs).

It localises to the nucleus. It is found in the chromosome. Endonuclease that cooperates with the MRE11-RAD50-NBN (MRN) complex in DNA-end resection, the first step of double-strand break (DSB) repair through the homologous recombination (HR) pathway. Functions downstream of the MRN complex and ATM, promotes ATR activation and its recruitment to DSBs in the S/G2 phase facilitating the generation of ssDNA. Specifically promotes the endonuclease activity of the MRN complex to clear DNA ends containing protein adducts: recruited to DSBs by nbn following phosphorylation, and promotes the endonuclease of mre11 to clear protein-DNA adducts and generate clean double-strand break ends. The protein is DNA endonuclease RBBP8 (rbbp8) of Danio rerio (Zebrafish).